Here is a 76-residue protein sequence, read N- to C-terminus: Exodeoxyribonuclease 7 small subunit (76 aa).

It belongs to the XseB family. As to quaternary structure, heterooligomer composed of large and small subunits.

Its subcellular location is the cytoplasm. It carries out the reaction Exonucleolytic cleavage in either 5'- to 3'- or 3'- to 5'-direction to yield nucleoside 5'-phosphates.. Its function is as follows. Bidirectionally degrades single-stranded DNA into large acid-insoluble oligonucleotides, which are then degraded further into small acid-soluble oligonucleotides. The protein is Exodeoxyribonuclease 7 small subunit of Lactiplantibacillus plantarum (strain ATCC BAA-793 / NCIMB 8826 / WCFS1) (Lactobacillus plantarum).